We begin with the raw amino-acid sequence, 523 residues long: MGDPSKQDILAIFKRLRSVPTNKVCFDCGAKNPSWASISYGVFLCIDCSGSHRSLGVHLSFIRSTELDSNWSWFQLRCMQVGGNSNASSFFHQHGCATKDTNAKYNSRAAQLYREKIKTLATQATRRHGTDLWLDSCAAPPVSPPPKEEDFFASHASLEVSGAMQASAQPESASSTPWGLETTPEKHEGGPGQGPSVEGLNTPGKAAPEVSSIIKKKPNQAKKGLGAKKGSLGAQKLTNTSFTEIEKQAQAVDKRKEQEDLARGAPKEESIVSSLRLAYKDLEISRKKDERLNLSGQKKVEAERLGMGFGSCRSGISHSVTSDMQTIEQESPTLAKPRRKYQEDPEDSYFSSSSKWSEQSSRYFDDPMELRSSSFSSWDDGADSYWKKDSSRDPEPAMRSTGSSDRPSARRKPEYEPIGSTDEAQKKFGNVKAISSDMYFGIQAQTDFETRARLERLSTSSSISSADLFDEQRKQTAGNYNLSNVLPNAPDMAQFKQGVRSVAGKLSVFANGVMTSIQDRYGS.

Residues 10–126 (LAIFKRLRSV…IKTLATQATR (117 aa)) form the Arf-GAP domain. The C4-type zinc-finger motif lies at 25 to 48 (CFDCGAKNPSWASISYGVFLCIDC). Residues 162–206 (GAMQASAQPESASSTPWGLETTPEKHEGGPGQGPSVEGLNTPGKA) form a disordered region. The segment covering 164–177 (MQASAQPESASSTP) has biased composition (polar residues). Residues serine 231 and serine 241 each carry the phosphoserine modification. The disordered stretch occupies residues 248 to 269 (QAQAVDKRKEQEDLARGAPKEE). A phosphoserine mark is found at serine 270, serine 274, and serine 331. The tract at residues 308 to 424 (GFGSCRSGIS…YEPIGSTDEA (117 aa)) is disordered. The segment covering 314–332 (SGISHSVTSDMQTIEQESP) has biased composition (polar residues). Residues 348–361 (SYFSSSSKWSEQSS) show a composition bias toward low complexity. Residue serine 377 is modified to Phosphoserine. Residues 385 to 396 (YWKKDSSRDPEP) are compositionally biased toward basic and acidic residues. Phosphoserine occurs at positions 435, 458, 460, 462, 464, and 465.

Its subcellular location is the cytoplasm. It is found in the golgi apparatus membrane. GAP activity stimulated by phosphatidylinositol 4,5-bisphosphate (PIP2). Its function is as follows. GTPase-activating protein (GAP) for ADP ribosylation factor 1 (ARF1). Hydrolysis of ARF1-bound GTP may lead to dissociation of coatomer from Golgi-derived membranes to allow fusion with target membranes. The chain is ADP-ribosylation factor GTPase-activating protein 3 (Arfgap3) from Mus musculus (Mouse).